Here is a 73-residue protein sequence, read N- to C-terminus: MKPNIHPDYHQIYVVMTDGTKYTTRSTWGKEGDTLNLDIDPTTHPAWIGGSQTLVDRGGRVSKFKNRFGNLGV.

Belongs to the bacterial ribosomal protein bL31 family. Type A subfamily. In terms of assembly, part of the 50S ribosomal subunit.

Its function is as follows. Binds the 23S rRNA. The chain is Large ribosomal subunit protein bL31 from Bartonella bacilliformis (strain ATCC 35685 / KC583 / Herrer 020/F12,63).